Here is a 267-residue protein sequence, read N- to C-terminus: Translation initiation factor 2 subunit alpha (267 aa).

The region spanning 10-81 (GELVVGKVDD…SAQQIDLSLK (72 aa)) is the S1 motif domain.

This sequence belongs to the eIF-2-alpha family. Heterotrimer composed of an alpha, a beta and a gamma chain.

EIF-2 functions in the early steps of protein synthesis by forming a ternary complex with GTP and initiator tRNA. In Halobacterium salinarum (strain ATCC 29341 / DSM 671 / R1), this protein is Translation initiation factor 2 subunit alpha.